The sequence spans 703 residues: Probable ATP-dependent RNA helicase DHX35 (703 aa).

Positions 64–229 (LYLIENYQTV…FNQNETSDPA (166 aa)) constitute a Helicase ATP-binding domain. An ATP-binding site is contributed by 77-84 (GETGCGKS). The DEAH box motif lies at 176-179 (DEAH). The Helicase C-terminal domain maps to 261–438 (TVETVVKIHQ…PVILQLKALG (178 aa)).

The protein belongs to the DEAD box helicase family. DEAH subfamily. Identified in the spliceosome C complex.

It catalyses the reaction ATP + H2O = ADP + phosphate + H(+). May be involved in pre-mRNA splicing. The polypeptide is Probable ATP-dependent RNA helicase DHX35 (DHX35) (Homo sapiens (Human)).